Here is a 471-residue protein sequence, read N- to C-terminus: Methyltransferase OMS1, mitochondrial (471 aa).

The N-terminal 39 residues, 1 to 39 (MIVFRRFPTCLLHHIRQPASRSLLLESQRRSLSFTSYKY), are a transit peptide targeting the mitochondrion. Residues 40–103 (NSSHIDDDKS…AIARSEKFSK (64 aa)) are Mitochondrial matrix-facing. Residues 104–123 (GMTKYMIGAYVIFLIYGLFF) traverse the membrane as a helical segment. At 124–471 (TKKLFAKDKE…LEPVPPVSKS (348 aa)) the chain is on the mitochondrial intermembrane side. Residues 450 to 463 (FEKKDDMASKKELE) show a composition bias toward basic and acidic residues. Positions 450-471 (FEKKDDMASKKELEPVPPVSKS) are disordered.

This sequence belongs to the methyltransferase superfamily. METL family.

The protein resides in the mitochondrion inner membrane. Functionally, mitochondrial methyltransferase which suppresses respiratory defects caused by OXA1 mutations when overexpressed. The protein is Methyltransferase OMS1, mitochondrial (OMS1) of Saccharomyces cerevisiae (strain ATCC 204508 / S288c) (Baker's yeast).